The primary structure comprises 321 residues: Lipoyl synthase (321 aa).

Residues Cys68, Cys73, Cys79, Cys94, Cys98, Cys101, and Ser308 each coordinate [4Fe-4S] cluster. One can recognise a Radical SAM core domain in the interval 80–297; it reads FNHGTATFMI…KVLADELGFT (218 aa).

This sequence belongs to the radical SAM superfamily. Lipoyl synthase family. [4Fe-4S] cluster is required as a cofactor.

It localises to the cytoplasm. The catalysed reaction is [[Fe-S] cluster scaffold protein carrying a second [4Fe-4S](2+) cluster] + N(6)-octanoyl-L-lysyl-[protein] + 2 oxidized [2Fe-2S]-[ferredoxin] + 2 S-adenosyl-L-methionine + 4 H(+) = [[Fe-S] cluster scaffold protein] + N(6)-[(R)-dihydrolipoyl]-L-lysyl-[protein] + 4 Fe(3+) + 2 hydrogen sulfide + 2 5'-deoxyadenosine + 2 L-methionine + 2 reduced [2Fe-2S]-[ferredoxin]. It participates in protein modification; protein lipoylation via endogenous pathway; protein N(6)-(lipoyl)lysine from octanoyl-[acyl-carrier-protein]: step 2/2. Functionally, catalyzes the radical-mediated insertion of two sulfur atoms into the C-6 and C-8 positions of the octanoyl moiety bound to the lipoyl domains of lipoate-dependent enzymes, thereby converting the octanoylated domains into lipoylated derivatives. The chain is Lipoyl synthase from Shewanella sp. (strain ANA-3).